The chain runs to 405 residues: Histidine decarboxylase (405 aa).

A substrate-binding site is contributed by His-121. Position 234 is an N6-(pyridoxal phosphate)lysine (Lys-234).

This sequence belongs to the group II decarboxylase family. As to quaternary structure, homotetramer. Pyridoxal 5'-phosphate serves as cofactor.

The enzyme catalyses L-histidine + H(+) = histamine + CO2. It participates in siderophore biosynthesis; pseudomonine biosynthesis. The sequence is that of Histidine decarboxylase from Pseudomonas fluorescens.